Reading from the N-terminus, the 310-residue chain is tRNA dimethylallyltransferase (310 aa).

15-22 (GATASGKT) contributes to the ATP binding site. Residue 17–22 (TASGKT) participates in substrate binding.

This sequence belongs to the IPP transferase family. In terms of assembly, monomer. Mg(2+) is required as a cofactor.

The catalysed reaction is adenosine(37) in tRNA + dimethylallyl diphosphate = N(6)-dimethylallyladenosine(37) in tRNA + diphosphate. Functionally, catalyzes the transfer of a dimethylallyl group onto the adenine at position 37 in tRNAs that read codons beginning with uridine, leading to the formation of N6-(dimethylallyl)adenosine (i(6)A). This chain is tRNA dimethylallyltransferase, found in Nocardioides sp. (strain ATCC BAA-499 / JS614).